A 149-amino-acid chain; its full sequence is Oligosaccharyltransferase complex subunit ostc (149 aa).

Over 1 to 32 (METLFSLPFTVLECPNVKLKKPSWLHMPSAMT) the chain is Cytoplasmic. A helical transmembrane segment spans residues 33 to 53 (VYAVVIVSYFLITGGIIYDVI). The Extracellular portion of the chain corresponds to 54–83 (VEPPSVGSMTDEHGHQRPVAFLAYRVNGQY). A helical membrane pass occupies residues 84-104 (IMEGLASSFLFTMGGLGFIIL). Residues 105–117 (DRSNAPNIPKLNR) lie on the Cytoplasmic side of the membrane. Residues 118–138 (FLLLFIGFVSVLLSFFMARVF) traverse the membrane as a helical segment. The Extracellular segment spans residues 139-149 (MRMKLPGYLMG).

The protein belongs to the OSTC family. In terms of assembly, specific component of the STT3A-containing form of the oligosaccharyltransferase (OST) complex.

The protein resides in the membrane. The protein operates within protein modification; protein glycosylation. Functionally, specific component of the STT3A-containing form of the oligosaccharyl transferase (OST) complex that catalyzes the initial transfer of a defined glycan (Glc(3)Man(9)GlcNAc(2) in eukaryotes) from the lipid carrier dolichol-pyrophosphate to an asparagine residue within an Asn-X-Ser/Thr consensus motif in nascent polypeptide chains, the first step in protein N-glycosylation. N-glycosylation occurs cotranslationally and the complex associates with the Sec61 complex at the channel-forming translocon complex that mediates protein translocation across the endoplasmic reticulum (ER). All subunits are required for a maximal enzyme activity. In Danio rerio (Zebrafish), this protein is Oligosaccharyltransferase complex subunit ostc.